We begin with the raw amino-acid sequence, 426 residues long: Proline--tRNA ligase (426 aa).

It belongs to the class-II aminoacyl-tRNA synthetase family. ProS type 2 subfamily. As to quaternary structure, homodimer.

It is found in the cytoplasm. It catalyses the reaction tRNA(Pro) + L-proline + ATP = L-prolyl-tRNA(Pro) + AMP + diphosphate. Its function is as follows. Catalyzes the attachment of proline to tRNA(Pro) in a two-step reaction: proline is first activated by ATP to form Pro-AMP and then transferred to the acceptor end of tRNA(Pro). The sequence is that of Proline--tRNA ligase from Ehrlichia ruminantium (strain Gardel).